Reading from the N-terminus, the 211-residue chain is MRLTAKQVTWLKVSLHLAGLLPFLWLVWAINHGGLGADPVKDIQHFTGRTALKFLLATLLITPLARYAKQPLLIRTRRLLGLWCFAWATLHLTSYALLELGVNNLALLGKELITRPYLTLGIISWVILLALAFTSTQAMQRKLGKHWQQLHNFVYLVAILAPIHYLWSVKIISPQPLIYAGLAVLLLALRYKKLRSLFNRLRKQVHNKLSV.

4 helical membrane-spanning segments follow: residues 17–37, 82–102, 116–136, and 153–173; these read LAGL…GLGA, LWCF…ELGV, PYLT…FTST, and FVYL…KIIS.

The protein belongs to the MsrQ family. As to quaternary structure, heterodimer of a catalytic subunit (MsrP) and a heme-binding subunit (MsrQ). FMN is required as a cofactor. The cofactor is heme b.

The protein localises to the cell inner membrane. Its function is as follows. Part of the MsrPQ system that repairs oxidized periplasmic proteins containing methionine sulfoxide residues (Met-O), using respiratory chain electrons. Thus protects these proteins from oxidative-stress damage caused by reactive species of oxygen and chlorine generated by the host defense mechanisms. MsrPQ is essential for the maintenance of envelope integrity under bleach stress, rescuing a wide series of structurally unrelated periplasmic proteins from methionine oxidation, including the primary periplasmic chaperone SurA and the lipoprotein Pal. MsrQ provides electrons for reduction to the reductase catalytic subunit MsrP, using the quinone pool of the respiratory chain. This Shigella boydii serotype 18 (strain CDC 3083-94 / BS512) protein is Protein-methionine-sulfoxide reductase heme-binding subunit MsrQ.